The following is a 30-amino-acid chain: Cycloviolacin-O2 (30 aa).

The segment at residues 1 to 30 (GIPCGESCVWIPCISSAIGCSCKSKVCYRN) is a cross-link (cyclopeptide (Gly-Asn)). Disulfide bonds link Cys-4-Cys-20, Cys-8-Cys-22, and Cys-13-Cys-27.

In terms of processing, this is a cyclic peptide.

Its function is as follows. Probably participates in a plant defense mechanism. This chain is Cycloviolacin-O2, found in Viola biflora (Yellow wood violet).